Reading from the N-terminus, the 959-residue chain is Bifunctional premutilin synthase (959 aa).

Residues 1–542 are class II diterpene cyclase; it reads MGLSEDLHAR…ALNVPIPRFD (542 aa). The DXDD motif motif lies at 309-312; that stretch reads DADM. The active-site For class II diterpene cyclase activity is Asp-311. Positions 543-959 are class I diterpene synthase; sequence PSSISTLPAI…TANGSNGIHH (417 aa). The active-site For class I diterpene synthase activity is the Asp-649. Mg(2+) is bound by residues Asp-649, Asp-653, and Asn-824. Positions 649-653 match the DDXXD motif motif; the sequence is DDYLD. Residues 931 to 959 are disordered; that stretch reads KGTNGVKKINGSSTNGTKVTANGSNGIHH. Over residues 940–959 the composition is skewed to polar residues; sequence NGSSTNGTKVTANGSNGIHH.

Belongs to the terpene synthase family. Mg(2+) is required as a cofactor.

Its pathway is secondary metabolite biosynthesis; terpenoid biosynthesis. In terms of biological role, bifunctional premutilin synthase; part of the gene cluster that mediates the biosynthesis of pleuromutilin, a tricyclic diterpene showing antibacterial properties. The geranylgeranyl diphosphate (GGPP) synthase catalyzes the first step in pleuromutilin biosynthesis. GGPP is then substrate of the premutilin synthase (PS) to yield premutilin. Premutilin synthase is a bifunctional enzyme composed of the fusion of a class II diterpene cyclase (DTC) and a class I diterpene synthase (DTS), with the corresponding domains and active sites containing characteristic aspartate-rich motifs. GGPP is first converted to mutildienyl-diphosphate (MPP) at the class II DTC site. MPP is subsequently further cyclized at the class I DTS site, followed by a 1,5-hydride shift and addition of water prior to terminating deprotonation, to yield premutilin. In addition to the aforementioned GGPP synthase and bifunctional diterpene synthase, the cluster also contains three cytochrome P450 monooxygenases, a short-chain alcohol dehydrogenase, and an acyltransferase, involved in the conversion of premutilin to pleuromutilin. The cytochrome P450 monooxygenases P450-1 and P450-2 hydroxylate premutilin at C-11 and C-3, respectively, producing 11-hydroxypremutilin and 3-hydroxypremutilin. The combination of the actions of both ple5 and ple6 leads to the production of 3,11-dihydroxypremutilin. The short chain dehydrogenase SDR further converts 3,11-dihydroxypremutilin into mutilin. The acetyltransferase ATF then acetylates mutilin to produce 14-O-acetylmutilin. Finally, the cytochrome P450 monooxygenase P450-3 catalyzes hydroxylation on the alpha position of the acetyl side chain of 14-O-acetylmutilin to yield pleuromutilin. This chain is Bifunctional premutilin synthase, found in Clitopilus passeckerianus (Pleurotus passeckerianus).